The primary structure comprises 369 residues: Maltose/maltodextrin import ATP-binding protein MalK (369 aa).

An ABC transporter domain is found at 4-234; that stretch reads VTLSSVYKAF…PANRFVAGFI (231 aa). 36-43 is a binding site for ATP; that stretch reads GPSGCGKS.

Belongs to the ABC transporter superfamily. Maltooligosaccharide importer (TC 3.A.1.1.1) family. As to quaternary structure, the complex is composed of two ATP-binding proteins (MalK), two transmembrane proteins (MalG and MalK) and a solute-binding protein (MalE).

The protein resides in the cell inner membrane. The catalysed reaction is D-maltose(out) + ATP + H2O = D-maltose(in) + ADP + phosphate + H(+). Part of the ABC transporter complex MalEFGK involved in maltose/maltodextrin import. Responsible for energy coupling to the transport system. The polypeptide is Maltose/maltodextrin import ATP-binding protein MalK (Yersinia pestis bv. Antiqua (strain Antiqua)).